Reading from the N-terminus, the 387-residue chain is Ferrochelatase (387 aa).

Positions 196 and 277 each coordinate Fe cation.

This sequence belongs to the ferrochelatase family.

Its subcellular location is the cytoplasm. It catalyses the reaction heme b + 2 H(+) = protoporphyrin IX + Fe(2+). It functions in the pathway porphyrin-containing compound metabolism; protoheme biosynthesis; protoheme from protoporphyrin-IX: step 1/1. Catalyzes the ferrous insertion into protoporphyrin IX. The protein is Ferrochelatase of Synechococcus elongatus (strain ATCC 33912 / PCC 7942 / FACHB-805) (Anacystis nidulans R2).